The sequence spans 119 residues: Large ribosomal subunit protein uL22 (119 aa).

This sequence belongs to the universal ribosomal protein uL22 family. Part of the 50S ribosomal subunit.

This protein binds specifically to 23S rRNA; its binding is stimulated by other ribosomal proteins, e.g. L4, L17, and L20. It is important during the early stages of 50S assembly. It makes multiple contacts with different domains of the 23S rRNA in the assembled 50S subunit and ribosome. Its function is as follows. The globular domain of the protein is located near the polypeptide exit tunnel on the outside of the subunit, while an extended beta-hairpin is found that lines the wall of the exit tunnel in the center of the 70S ribosome. The sequence is that of Large ribosomal subunit protein uL22 from Bifidobacterium adolescentis (strain ATCC 15703 / DSM 20083 / NCTC 11814 / E194a).